We begin with the raw amino-acid sequence, 487 residues long: RCC1 repeat-containing protein DDB_G0284033 (487 aa).

RCC1 repeat units follow at residues 66-127, 207-259, 260-313, 373-426, and 428-483; these read SNKV…FSGY, RSLI…ALSN, DGKL…ALTS, NGNI…IVET, and DGRF…SLNS.

The polypeptide is RCC1 repeat-containing protein DDB_G0284033 (Dictyostelium discoideum (Social amoeba)).